Here is a 207-residue protein sequence, read N- to C-terminus: Peptidyl-tRNA hydrolase (207 aa).

Tyrosine 19 contributes to the tRNA binding site. Histidine 24 functions as the Proton acceptor in the catalytic mechanism. Phenylalanine 70, asparagine 72, and asparagine 118 together coordinate tRNA.

This sequence belongs to the PTH family. As to quaternary structure, monomer.

Its subcellular location is the cytoplasm. It catalyses the reaction an N-acyl-L-alpha-aminoacyl-tRNA + H2O = an N-acyl-L-amino acid + a tRNA + H(+). In terms of biological role, hydrolyzes ribosome-free peptidyl-tRNAs (with 1 or more amino acids incorporated), which drop off the ribosome during protein synthesis, or as a result of ribosome stalling. Catalyzes the release of premature peptidyl moieties from peptidyl-tRNA molecules trapped in stalled 50S ribosomal subunits, and thus maintains levels of free tRNAs and 50S ribosomes. In Synechococcus sp. (strain CC9311), this protein is Peptidyl-tRNA hydrolase.